Here is a 318-residue protein sequence, read N- to C-terminus: Aspartate carbamoyltransferase catalytic subunit (318 aa).

Positions 59 and 60 each coordinate carbamoyl phosphate. Lysine 87 is a binding site for L-aspartate. Carbamoyl phosphate is bound by residues arginine 109, histidine 137, and glutamine 140. Arginine 170 and arginine 224 together coordinate L-aspartate. Residues glycine 265 and proline 266 each contribute to the carbamoyl phosphate site.

It belongs to the aspartate/ornithine carbamoyltransferase superfamily. ATCase family. As to quaternary structure, heterododecamer (2C3:3R2) of six catalytic PyrB chains organized as two trimers (C3), and six regulatory PyrI chains organized as three dimers (R2).

It catalyses the reaction carbamoyl phosphate + L-aspartate = N-carbamoyl-L-aspartate + phosphate + H(+). Its pathway is pyrimidine metabolism; UMP biosynthesis via de novo pathway; (S)-dihydroorotate from bicarbonate: step 2/3. Functionally, catalyzes the condensation of carbamoyl phosphate and aspartate to form carbamoyl aspartate and inorganic phosphate, the committed step in the de novo pyrimidine nucleotide biosynthesis pathway. This Rhizobium etli (strain CIAT 652) protein is Aspartate carbamoyltransferase catalytic subunit.